The following is a 472-amino-acid chain: Keratin, type I cytoskeletal 14 (472 aa).

The head stretch occupies residues 1 to 114 (MTTCSRQFTS…AGGDGLLVGS (114 aa)). The coil 1A stretch occupies residues 115-150 (EKVTMQNLNDRLASYLDKVRALEEANADLEVKIRDW). The IF rod domain occupies 115–426 (EKVTMQNLND…RLLEGEDAHL (312 aa)). Residues 151–168 (YQRQRPAEIKDYSPYFKT) are linker 1. The interval 169–260 (IEDLRNKILT…KNHEEEMNAL (92 aa)) is coil 1B. The interval 261–283 (RGQVGGDVNVEMDAAPGVDLSRI) is linker 12. The interval 284 to 422 (LNEMRDQYEK…ATYRRLLEGE (139 aa)) is coil 2. The interval 423 to 472 (DAHLSSSQFSSGSQSSRDVTSSSRQIRTKVMDVHDGKVVSTHEQVLRTKN) is tail. An interaction with Type I keratins and keratin filaments region spans residues 425–472 (HLSSSQFSSGSQSSRDVTSSSRQIRTKVMDVHDGKVVSTHEQVLRTKN). The interval 426–472 (LSSSQFSSGSQSSRDVTSSSRQIRTKVMDVHDGKVVSTHEQVLRTKN) is disordered. Low complexity predominate over residues 427–445 (SSSQFSSGSQSSRDVTSSS). A Phosphoserine modification is found at Ser435.

Belongs to the intermediate filament family. In terms of assembly, heterotetramer of two type I and two type II keratins. Forms a disulfide-linked heterodimer (via 2B domains) with KRT5 (via 2B domains). Forms a heterodimer with KRT1; the interaction is more abundant in the absence of KRT5. Interacts with PLEC isoform 1C, when in a heterodimer with KRT5. Interacts with TRADD and with keratin filaments. Associates with other type I keratins. Interacts with EPPK1. Interacts with KLHL24. Interacts with PKP1 (via N-terminus) and PKP2. In terms of processing, a disulfide bond is formed between rather than within filaments and promotes the formation of a keratin filament cage around the nucleus. Post-translationally, ubiquitinated by the BCR(KLHL24) E3 ubiquitin ligase complex. As to expression, expressed in the corneal epithelium (at protein level). Detected in the basal layer, lowered within the more apically located layers specifically in the stratum spinosum, stratum granulosum but is not detected in stratum corneum. Strongly expressed in the outer root sheath of anagen follicles but not in the germinative matrix, inner root sheath or hair. Found in keratinocytes surrounding the club hair during telogen.

The protein localises to the cytoplasm. Its subcellular location is the nucleus. Its function is as follows. The nonhelical tail domain is involved in promoting KRT5-KRT14 filaments to self-organize into large bundles and enhances the mechanical properties involved in resilience of keratin intermediate filaments in vitro. The chain is Keratin, type I cytoskeletal 14 (KRT14) from Homo sapiens (Human).